The following is a 101-amino-acid chain: MAKKSKIAKNEKRKEIVARYAERRAELKAIIRNPNTSDEDRLDAQFELNSQPRDAAAVRVRNRDSHDGRPRGYLRKFGLSRVRMREMAHRGELPGVRKSSW.

Positions Arg53 to Gly72 are disordered. Positions Arg61–Pro70 are enriched in basic and acidic residues.

The protein belongs to the universal ribosomal protein uS14 family. As to quaternary structure, part of the 30S ribosomal subunit. Contacts proteins S3 and S10.

Functionally, binds 16S rRNA, required for the assembly of 30S particles and may also be responsible for determining the conformation of the 16S rRNA at the A site. This is Small ribosomal subunit protein uS14 from Corynebacterium glutamicum (strain R).